The chain runs to 391 residues: MMITKQSYQKFALMRVFVFSLSAFIFNTTEFVPVALLSDIAKSFEMESATVGLMITAYAWVVSLGSLPLMLLSAKIERKRLLLFLFALFILSHILSALAWNFWVLLISRMGIAFAHSIFWSITASLVIRVAPRNKKQQALGLLALGSSLAMILGLPLGRIIGQILDWRSTFGVIGGVATLIMLLMWKLLPHLPSRNAGTLASVPVLMKRPLLVGIYLLVIMVISGHFTTYSYIEPFIIQISQFSPDITTLMLFVFGLAGVAGSFLFGRLYAKNSRKFIAFAMVLVICPQLLLFVFKNLEWVIFLQIFLWGIGITSLTIALQMRVLQLAPDATDVASAIFSGSYNVGIGSGALFGSIVIHQLGLEYIGFVGGALGLLALFWLRFITIKFKKT.

Helical transmembrane passes span Val16 to Leu36, Val51 to Leu71, Leu82 to Phe102, Trp103 to Thr123, Gln138 to Gly158, Thr170 to Pro190, Pro210 to Tyr230, Ile247 to Gly267, Phe277 to Asn297, Trp300 to Leu320, Ile338 to Ile358, and Leu361 to Leu381.

This sequence belongs to the major facilitator superfamily. SotB (TC 2.A.1.2) family.

It localises to the cell inner membrane. Its function is as follows. Involved in the efflux of sugars. The physiological role may be the reduction of the intracellular concentration of toxic sugars or sugar metabolites. This is Probable sugar efflux transporter from Helicobacter pylori (strain P12).